The sequence spans 122 residues: uncharacterized protein (122 aa).

Residues 1–10 show a composition bias toward polar residues; the sequence is MGTGLRSQSL. The disordered stretch occupies residues 1-68; that stretch reads MGTGLRSQSL…GQEWLPGSLG (68 aa). Positions 40-56 are enriched in basic and acidic residues; that stretch reads QGREKSRSSDGGPERLD.

This is an uncharacterized protein from Bos taurus (Bovine).